A 428-amino-acid polypeptide reads, in one-letter code: Protein CLP1 homolog (428 aa).

ATP contacts are provided by residues glutamate 22, lysine 63, and 127 to 132; that span reads DVGKST.

It belongs to the Clp1 family. Clp1 subfamily.

It is found in the nucleus. In terms of biological role, required for endonucleolytic cleavage during polyadenylation-dependent pre-mRNA 3'-end formation. In Nematostella vectensis (Starlet sea anemone), this protein is Protein CLP1 homolog.